A 126-amino-acid chain; its full sequence is Late expression factor 11 (126 aa).

It belongs to the baculoviridae LEF-11 family.

Functionally, involved in late/very late gene activation. The polypeptide is Late expression factor 11 (LEF-11) (Epiphyas postvittana nucleopolyhedrovirus (EppoMNPV)).